A 39-amino-acid polypeptide reads, in one-letter code: Photosystem II reaction center protein J (39 aa).

The helical transmembrane segment at 7 to 27 (IPLWLIGTIVGILVIGLIGIY) threads the bilayer.

This sequence belongs to the PsbJ family. PSII is composed of 1 copy each of membrane proteins PsbA, PsbB, PsbC, PsbD, PsbE, PsbF, PsbH, PsbI, PsbJ, PsbK, PsbL, PsbM, PsbT, PsbX, PsbY, PsbZ, Psb30/Ycf12, at least 3 peripheral proteins of the oxygen-evolving complex and a large number of cofactors. It forms dimeric complexes.

It is found in the plastid. The protein resides in the chloroplast thylakoid membrane. One of the components of the core complex of photosystem II (PSII). PSII is a light-driven water:plastoquinone oxidoreductase that uses light energy to abstract electrons from H(2)O, generating O(2) and a proton gradient subsequently used for ATP formation. It consists of a core antenna complex that captures photons, and an electron transfer chain that converts photonic excitation into a charge separation. The polypeptide is Photosystem II reaction center protein J (Welwitschia mirabilis (Tree tumbo)).